The sequence spans 741 residues: Penicillin-binding protein 1B (741 aa).

Topologically, residues 1-12 are cytoplasmic; sequence MYPVNLKLSIKF. A helical; Signal-anchor for type II membrane protein membrane pass occupies residues 13–33; sequence LFYFFLYFLLIIIIYGVYLYF. Residues 34–741 lie on the Extracellular side of the membrane; that stretch reads KINQVIHGKI…WIRNHNIFCT (708 aa). The tract at residues 139–311 is transglycosylase; that stretch reads LRLDPQLIAM…SLYNPWNNPV (173 aa). The Proton donor; for transglycosylase activity role is filled by E177. A transpeptidase region spans residues 395–687; the sequence is ENAIRHGIQQ…STGAMKIYHN (293 aa). Residue S454 is the Acyl-ester intermediate; for transpeptidase activity of the active site.

In the N-terminal section; belongs to the glycosyltransferase 51 family. The protein in the C-terminal section; belongs to the transpeptidase family.

Its subcellular location is the cell membrane. The catalysed reaction is [GlcNAc-(1-&gt;4)-Mur2Ac(oyl-L-Ala-gamma-D-Glu-L-Lys-D-Ala-D-Ala)](n)-di-trans,octa-cis-undecaprenyl diphosphate + beta-D-GlcNAc-(1-&gt;4)-Mur2Ac(oyl-L-Ala-gamma-D-Glu-L-Lys-D-Ala-D-Ala)-di-trans,octa-cis-undecaprenyl diphosphate = [GlcNAc-(1-&gt;4)-Mur2Ac(oyl-L-Ala-gamma-D-Glu-L-Lys-D-Ala-D-Ala)](n+1)-di-trans,octa-cis-undecaprenyl diphosphate + di-trans,octa-cis-undecaprenyl diphosphate + H(+). It catalyses the reaction Preferential cleavage: (Ac)2-L-Lys-D-Ala-|-D-Ala. Also transpeptidation of peptidyl-alanyl moieties that are N-acyl substituents of D-alanine.. Its pathway is cell wall biogenesis; peptidoglycan biosynthesis. In terms of biological role, cell wall formation. Synthesis of cross-linked peptidoglycan from the lipid intermediates. The enzyme has a penicillin-insensitive transglycosylase N-terminal domain (formation of linear glycan strands) and a penicillin-sensitive transpeptidase C-terminal domain (cross-linking of the peptide subunits). This Buchnera aphidicola subsp. Baizongia pistaciae (strain Bp) protein is Penicillin-binding protein 1B (mrcB).